A 316-amino-acid chain; its full sequence is Bifunctional riboflavin kinase/FMN adenylyltransferase (316 aa).

The protein belongs to the RibF family.

It carries out the reaction riboflavin + ATP = FMN + ADP + H(+). The enzyme catalyses FMN + ATP + H(+) = FAD + diphosphate. The protein operates within cofactor biosynthesis; FAD biosynthesis; FAD from FMN: step 1/1. It functions in the pathway cofactor biosynthesis; FMN biosynthesis; FMN from riboflavin (ATP route): step 1/1. In terms of biological role, catalyzes the phosphorylation of riboflavin to FMN followed by the adenylation of FMN to FAD. In Bacillus subtilis (strain 168), this protein is Bifunctional riboflavin kinase/FMN adenylyltransferase (ribC).